The chain runs to 187 residues: Orotate phosphoribosyltransferase (187 aa).

5-phospho-alpha-D-ribose 1-diphosphate-binding positions include Arg98, Lys99, Lys102, His104, and 128–136; that span reads EDVTTTGGS. Positions 132 and 160 each coordinate orotate.

It belongs to the purine/pyrimidine phosphoribosyltransferase family. PyrE subfamily. Homodimer. Requires Mg(2+) as cofactor.

The enzyme catalyses orotidine 5'-phosphate + diphosphate = orotate + 5-phospho-alpha-D-ribose 1-diphosphate. It functions in the pathway pyrimidine metabolism; UMP biosynthesis via de novo pathway; UMP from orotate: step 1/2. Its function is as follows. Catalyzes the transfer of a ribosyl phosphate group from 5-phosphoribose 1-diphosphate to orotate, leading to the formation of orotidine monophosphate (OMP). This Rhodopseudomonas palustris (strain ATCC BAA-98 / CGA009) protein is Orotate phosphoribosyltransferase.